Consider the following 288-residue polypeptide: MHGPLAPAPSPERLGAAPARQRSDGRIRLRVGPARPGGGTRILDLAEAGPSRLRFPRGTCALEAVLVNTAGGVACGDSFAIDLALEPGADLVLTTTAAEKIYRSDGPVSRIANTLTLGEGAGLAWLPQETILFDRARVRRRFEADLADGAALIAAEVVAFGRAARGERIVDGLFADSWRIRRGGRLAYADSVLLEGPISDHLARPAIGGGARACATILDVSPGAEARLEEARARLAEAASPGTTAAASAWNGHLAVRALGDAVGPLRGLVARFLAGYRALPMPRVWQS.

A compositionally biased stretch (pro residues) spans 1 to 10 (MHGPLAPAPS). Positions 1-35 (MHGPLAPAPSPERLGAAPARQRSDGRIRLRVGPAR) are disordered.

Belongs to the UreD family. In terms of assembly, ureD, UreF and UreG form a complex that acts as a GTP-hydrolysis-dependent molecular chaperone, activating the urease apoprotein by helping to assemble the nickel containing metallocenter of UreC. The UreE protein probably delivers the nickel.

It is found in the cytoplasm. Functionally, required for maturation of urease via the functional incorporation of the urease nickel metallocenter. This chain is Urease accessory protein UreD 1, found in Methylobacterium radiotolerans (strain ATCC 27329 / DSM 1819 / JCM 2831 / NBRC 15690 / NCIMB 10815 / 0-1).